The chain runs to 493 residues: Cholesteryl ester transfer protein (493 aa).

Residues 1–17 (MLAATVLTLALLGNAHA) form the signal peptide. Asn105 carries an N-linked (GlcNAc...) (complex) asparagine glycan. A disulfide bridge connects residues Cys160 and Cys201. N-linked (GlcNAc...) asparagine glycosylation is found at Asn257, Asn358, and Asn413.

This sequence belongs to the BPI/LBP/Plunc superfamily. BPI/LBP family. In terms of tissue distribution, expressed by the liver and secreted in plasma.

The protein resides in the secreted. It catalyses the reaction cholesteryl (9Z-octadecenoate)(in) = cholesteryl (9Z-octadecenoate)(out). It carries out the reaction 1,2,3-tri-(9Z-octadecenoyl)-glycerol(in) = 1,2,3-tri-(9Z-octadecenoyl)-glycerol(out). The enzyme catalyses cholesteryl (9Z,12Z)-octadecadienoate(in) = cholesteryl (9Z,12Z)-octadecadienoate(out). Involved in the transfer of neutral lipids, including cholesteryl ester and triglyceride, among lipoprotein particles. Allows the net movement of cholesteryl ester from high density lipoproteins/HDL to triglyceride-rich very low density lipoproteins/VLDL, and the equimolar transport of triglyceride from VLDL to HDL. Regulates the reverse cholesterol transport, by which excess cholesterol is removed from peripheral tissues and returned to the liver for elimination. The polypeptide is Cholesteryl ester transfer protein (Homo sapiens (Human)).